The chain runs to 1138 residues: MRIIKGRKRGKNKKPTLILKIHVIQAENIEALKTFNCNPVCFVTTNTFYSQKTNKLKNSNTHWNQTLRIKLPRNPTSEWLRIIVYDALPTGAPPTTPSRPRTTTANTSSSTLSNSGLSSHSHSSRNLNVTSKGNQTSTSINSVSSSATPAPSHSSSSLSTTGPGSTHKNRINSYLYLGEAKISLLDLFKRKDTTTSYKFSIEAQRYHLYDMKGGKDQDSLNCNFLVGDILLGFKLECNVKRTPTFQAFNAWRNELNTYLGRIDRNKARMRSSSSLPPPLEDMLSNSSAVSGNEIRREKPYSDTDLAHDEEVNAEDEIDAEESIEDMNSSGSICTERRYDIDNDTIFDSISEVVSLNDEELDILNDFEEADHPNVPDINVHDIDEDTRISLSSMITALDEYDIVEPEDVAKLPAVSENDITSVDDEESENQQESDEEFDIYNEDEREDSDFQSKEYIGSRLLHLQRGKHNKSYANYLYRRAKSNFFISKKEHAMGVVFMHIGAIKNLPALRNRLSKTNYEMDPFIVISFGRRVFKTSWRKHTLNPEFNEYAAFEVFPHETNFAFSIKVVDKDSFSFNDDVAKCELAWFDMLQQQQHENEWIPYEIPLDLTVEPAHAPKQPVLYSSFKYVSYPFLKKSFWKEAVDTSVNLERLDIIQVMLYLERLGSFTMADSFELFQHFNKSAWAGQSITRSQLVEGLQSWRKSTNFKRIWTCPRCMRSCKPTRNARRSKLVLENDLITHFAICTFSKEHKTLKPSYVSSAFASKRWFSKVLIKLTYGKYALGSNNANILVQDRDTGIIIEEKISAHVKLGMRIIYNGKSPESKKFRSLLKTLSIRQGKKFDSTASAKQIEPFIKFHSLDLSQCRDKDFKTFNEFFYRKLKPGSRLPESNNKEILFSPADSRCTVFPTIQESKEIWVKGRKFSIKKLANNYNPETFNDNNCSIGIFRLAPQDYHRFHSPCNGTIGKPVYVDGEYYTVNPMAVRSELDVFGENIRVIIPIDSPQFGKLLYIPIGAMMVGSILLTCKENDVVESGQELGYFKFGGSTIIIIIPHNNFMFDSDLVKNSSERIETLVKVGMSIGHTSNVNELKRIRIKVDDPKKIERIKRTISVSDENAKSTGNVTWEYHTLREMMNKDFAGL.

The C2 1 domain maps to 1 to 122; the sequence is MRIIKGRKRG…SNSGLSSHSH (122 aa). Disordered stretches follow at residues 90–166, 269–305, and 413–448; these read TGAP…PGST, MRSS…DTDL, and AVSE…REDS. Residues 98 to 121 show a composition bias toward low complexity; sequence SRPRTTTANTSSSTLSNSGLSSHS. Positions 125–135 are enriched in polar residues; it reads RNLNVTSKGNQ. Low complexity predominate over residues 136–166; that stretch reads TSTSINSVSSSATPAPSHSSSSLSTTGPGST. The segment covering 293–305 has biased composition (basic and acidic residues); it reads EIRREKPYSDTDL. Residues 421-448 are compositionally biased toward acidic residues; sequence SVDDEESENQQESDEEFDIYNEDEREDS. The 123-residue stretch at 478–600 folds into the C2 2 domain; the sequence is RRAKSNFFIS…QQQQHENEWI (123 aa). Positions 571, 574, and 577 each coordinate Ca(2+). Active-site charge relay system; for autoendoproteolytic cleavage activity residues include Asp899, His956, and Ser1043. The active-site Schiff-base intermediate with substrate; via pyruvic acid; for decarboxylase activity is the Ser1043. At Ser1043 the chain carries Pyruvic acid (Ser); by autocatalysis.

Belongs to the phosphatidylserine decarboxylase family. PSD-B subfamily. Eukaryotic type II sub-subfamily. As to quaternary structure, heterodimer of a large membrane-associated beta subunit and a small pyruvoyl-containing alpha subunit. Interacts with pstB2/PDR17. This interaction may be a means to structurally tether the donor membrane (ER) harboring PstB2/PDR17 to acceptor membranes (Golgi/endosomes) harboring PSD2 during PtdSer transport to the site of PtdEtn synthesis. Requires pyruvate as cofactor. Ca(2+) is required as a cofactor. In terms of processing, is synthesized initially as an inactive proenzyme. Formation of the active enzyme involves a self-maturation process in which the active site pyruvoyl group is generated from an internal serine residue via an autocatalytic post-translational modification. Two non-identical subunits are generated from the proenzyme in this reaction, and the pyruvate is formed at the N-terminus of the alpha chain, which is derived from the carboxyl end of the proenzyme. The autoendoproteolytic cleavage occurs by a canonical serine protease mechanism, in which the side chain hydroxyl group of the serine supplies its oxygen atom to form the C-terminus of the beta chain, while the remainder of the serine residue undergoes an oxidative deamination to produce ammonia and the pyruvoyl prosthetic group on the alpha chain. During this reaction, the Ser that is part of the protease active site of the proenzyme becomes the pyruvoyl prosthetic group, which constitutes an essential element of the active site of the mature decarboxylase.

It localises to the golgi apparatus membrane. Its subcellular location is the endosome membrane. It carries out the reaction a 1,2-diacyl-sn-glycero-3-phospho-L-serine + H(+) = a 1,2-diacyl-sn-glycero-3-phosphoethanolamine + CO2. Its pathway is phospholipid metabolism; phosphatidylethanolamine biosynthesis; phosphatidylethanolamine from CDP-diacylglycerol: step 2/2. Catalyzes the formation of phosphatidylethanolamine (PtdEtn) from phosphatidylserine (PtdSer). Plays a central role in phospholipid metabolism and in the interorganelle trafficking of phosphatidylserine. Phosphatidylethanolamine produced by PSD2 is insufficient to completely provide the PtdEtn pool required by mitochondria under respiratory conditions. PSD2 is also involved in the PtdSer transport step to the site of PtdEtn synthesis on the Golgi/endosome membranes. Required for normal heavy metal resistance. This chain is Phosphatidylserine decarboxylase proenzyme 2, found in Saccharomyces cerevisiae (strain ATCC 204508 / S288c) (Baker's yeast).